The primary structure comprises 447 residues: Elongation factor 1-alpha (447 aa).

The region spanning 5–230 (KFHINIVVIG…DQINDAKRPS (226 aa)) is the tr-type G domain. The G1 stretch occupies residues 14-21 (GHVDSGKS). Residue 14–21 (GHVDSGKS) participates in GTP binding. N6,N6-dimethyllysine is present on Lys55. The interval 70 to 74 (GITID) is G2. At Lys79 the chain carries N6,N6,N6-trimethyllysine. The interval 91 to 94 (DAPG) is G3. GTP-binding positions include 91–95 (DAPGH) and 153–156 (NKMD). The G4 stretch occupies residues 153–156 (NKMD). At Lys187 the chain carries N6,N6,N6-trimethyllysine. A G5 region spans residues 194–196 (SGF). Lys261 carries the N6-methyllysine modification. A 5-glutamyl glycerylphosphorylethanolamine modification is found at Glu289. Lys306 is subject to N6,N6,N6-trimethyllysine. Glu362 is modified (5-glutamyl glycerylphosphorylethanolamine). Lys396 is modified (N6,N6,N6-trimethyllysine).

This sequence belongs to the TRAFAC class translation factor GTPase superfamily. Classic translation factor GTPase family. EF-Tu/EF-1A subfamily. In terms of tissue distribution, was detected in all tissues examined but was most abundant in roots and salt-adapted cultured cells.

Its subcellular location is the cytoplasm. Functionally, this protein promotes the GTP-dependent binding of aminoacyl-tRNA to the A-site of ribosomes during protein biosynthesis. The polypeptide is Elongation factor 1-alpha (Nicotiana tabacum (Common tobacco)).